The following is a 259-amino-acid chain: MLPLNATITQIIEESPLIRTFFFDHKFEDMEPGQFVMVWVRGVDEVPMGLSRNNSITVQKVGEATSKLFELKEGDSFGLRGPFGKGFTLPAKGEKVLIIAGGVGAAPLSPYAEAAFAAGAEVNTVLGARSEEHLLFEGRFEALGTVYVSTDDGSKGFKGFVTDVLKNLDVTSYDRIAVCGPEIMMASVFRFLEEREVLEKSEFSLHRYFKCGIGVCGACCIDRSGLRVCKDGPVFSGTQLIGSELGKYSRDASGRRVKI.

Residues 1–89 (MLPLNATITQ…RGPFGKGFTL (89 aa)) form the FAD-binding FR-type domain. 4 residues coordinate [2Fe-2S] cluster: C211, C216, C219, and C229.

Belongs to the PyrK family. As to quaternary structure, heterotetramer of 2 PyrK and 2 PyrD type B subunits. It depends on [2Fe-2S] cluster as a cofactor. The cofactor is FAD.

Its pathway is pyrimidine metabolism; UMP biosynthesis via de novo pathway; orotate from (S)-dihydroorotate (NAD(+) route): step 1/1. Responsible for channeling the electrons from the oxidation of dihydroorotate from the FMN redox center in the PyrD type B subunit to the ultimate electron acceptor NAD(+). In Methanosarcina mazei (strain ATCC BAA-159 / DSM 3647 / Goe1 / Go1 / JCM 11833 / OCM 88) (Methanosarcina frisia), this protein is Probable dihydroorotate dehydrogenase B (NAD(+)), electron transfer subunit.